The sequence spans 453 residues: GTPase Der (453 aa).

EngA-type G domains follow at residues 4–169 and 177–352; these read PIVA…SETP and IKVA…RQFE. Residues 10–17, 57–61, 120–123, 183–190, 230–234, and 295–298 contribute to the GTP site; these read GRPNVGKS, DTGGL, NKCE, DTAGI, and NKWD. Residues 353–438 enclose the KH-like domain; sequence QRVTTSVINE…PIRLLWRGKK (86 aa).

Belongs to the TRAFAC class TrmE-Era-EngA-EngB-Septin-like GTPase superfamily. EngA (Der) GTPase family. As to quaternary structure, associates with the 50S ribosomal subunit.

Its function is as follows. GTPase that plays an essential role in the late steps of ribosome biogenesis. The chain is GTPase Der from Acaryochloris marina (strain MBIC 11017).